The primary structure comprises 108 residues: MKDVTKVALLIARAMCTSSGTFVFELAFSIAECAGRPLGGGRSKYARRRRAISIARCHRCYRLWPPTVFTTRCDNKYCVPGISYNVRVAQFIDEGVTEVIPSVINKRE.

The tract at residues 47-50 is basic; it reads RRRR. The C4-type zinc-finger motif lies at 57–78; it reads CHRCYRLWPPTVFTTRCDNKYC.

The protein belongs to the carlaviruses nucleic acid-binding protein family.

In terms of biological role, suppressor of viral-induced RNA silencing. The potential mechanism of action is based on sequestering siRNAs. The polypeptide is RNA silencing suppressor (Solanum tuberosum (Potato)).